Reading from the N-terminus, the 137-residue chain is Large ribosomal subunit protein eL28 (137 aa).

Serine 2 is subject to N-acetylserine. Glycyl lysine isopeptide (Lys-Gly) (interchain with G-Cter in SUMO2) cross-links involve residues lysine 58 and lysine 65. At serine 115 the chain carries Phosphoserine.

The protein belongs to the eukaryotic ribosomal protein eL28 family. Component of the large ribosomal subunit.

The protein resides in the cytoplasm. In terms of biological role, component of the large ribosomal subunit. The ribosome is a large ribonucleoprotein complex responsible for the synthesis of proteins in the cell. This is Large ribosomal subunit protein eL28 (RPL28) from Oryctolagus cuniculus (Rabbit).